The primary structure comprises 430 residues: Enolase (430 aa).

Q163 provides a ligand contact to (2R)-2-phosphoglycerate. The active-site Proton donor is the E205. Mg(2+)-binding residues include D242, E287, and D314. (2R)-2-phosphoglycerate-binding residues include K339, R368, S369, and K390. K339 acts as the Proton acceptor in catalysis.

Belongs to the enolase family. The cofactor is Mg(2+).

The protein resides in the cytoplasm. The protein localises to the secreted. It localises to the cell surface. It catalyses the reaction (2R)-2-phosphoglycerate = phosphoenolpyruvate + H2O. The protein operates within carbohydrate degradation; glycolysis; pyruvate from D-glyceraldehyde 3-phosphate: step 4/5. Its function is as follows. Catalyzes the reversible conversion of 2-phosphoglycerate (2-PG) into phosphoenolpyruvate (PEP). It is essential for the degradation of carbohydrates via glycolysis. The protein is Enolase of Alkaliphilus metalliredigens (strain QYMF).